The chain runs to 639 residues: AP2-like ethylene-responsive transcription factor CRL5 (639 aa).

Disordered stretches follow at residues 25–59 and 258–277; these read PHMA…QQQH and GRKR…HHRK. Residues 43–59 show a composition bias toward low complexity; it reads QQQQQQQQQQHHQQQQH. DNA-binding regions (AP2/ERF) lie at residues 288–351 and 387–445; these read QYRG…INFP and MYRG…TNFD. Low complexity predominate over residues 547 to 561; the sequence is QQQQQHMSMSAASSL. Residues 547–579 are disordered; it reads QQQQQHMSMSAASSLVTSLSNSREGSPDRGGGL.

This sequence belongs to the AP2/ERF transcription factor family. AP2 subfamily. Highly expressed at the base of the stem. Expressed in stems. Expressed a low levels in crown roots and seeds. Expressed in the stem region where adventitious (crown) root initiation occurs.

It is found in the nucleus. Acts as a positive regulator of adventitious (crown) root formation by promoting its initiation. Promotes adventitious root initiation through repression of cytokinin signaling by positively regulating the two-component response regulator RR1. Regulated by the auxin response factor and transcriptional activator ARF23/ARF1. The sequence is that of AP2-like ethylene-responsive transcription factor CRL5 from Oryza sativa subsp. japonica (Rice).